An 822-amino-acid chain; its full sequence is uncharacterized protein (822 aa).

Residues Met1–Ala230 are disordered. At Ser27 the chain carries Phosphoserine. Basic residues predominate over residues Ser34 to Asn44. Phosphoserine is present on residues Ser47, Ser51, and Ser55. Tyr57 carries the post-translational modification Phosphotyrosine. Over residues Pro61–Val70 the composition is skewed to acidic residues. The segment covering Val73–Lys85 has biased composition (basic residues). The span at Phe92–Ser106 shows a compositional bias: acidic residues. A Phosphoserine modification is found at Ser97. A compositionally biased stretch (basic residues) spans Arg111 to Ser121. 2 stretches are compositionally biased toward acidic residues: residues Leu129–Glu144 and Ser163–Glu172. Phosphoserine is present on residues Ser137 and Ser163. ABC transporter domains follow at residues Leu276 to Ala519 and Ile594 to Arg809. ATP contacts are provided by residues Ala308–Ser315 and Gly627–Thr634.

It belongs to the ABC transporter superfamily.

The protein resides in the cytoplasm. This is an uncharacterized protein from Schizosaccharomyces pombe (strain 972 / ATCC 24843) (Fission yeast).